A 162-amino-acid polypeptide reads, in one-letter code: Regulatory protein RecX (162 aa).

The protein belongs to the RecX family.

The protein localises to the cytoplasm. Its function is as follows. Modulates RecA activity. The protein is Regulatory protein RecX of Xanthomonas campestris pv. campestris (strain 8004).